Here is a 329-residue protein sequence, read N- to C-terminus: Delta(7)-sterol 5(6)-desaturase erg32 (329 aa).

2 helical membrane passes run 67-87 (LFLI…SFAY) and 149-169 (FYLF…IYWI). A Fatty acid hydroxylase domain is found at 156–281 (ALFLLFSDFL…FFTLFDRLCS (126 aa)). The Histidine box-1 motif lies at 170–175 (HRALHH). A Histidine box-2 motif is present at residues 183–187 (HKLHH). A helical membrane pass occupies residues 210–230 (LPYHMFPFFFPLNKYVYLLLF). Residues 257-262 (HHAAHH) carry the Histidine box-3 motif.

It belongs to the sterol desaturase family. Fe cation serves as cofactor.

The protein resides in the endoplasmic reticulum membrane. It localises to the golgi apparatus membrane. It catalyses the reaction episterol + 2 Fe(II)-[cytochrome b5] + O2 + 2 H(+) = 5-dehydroepisterol + 2 Fe(III)-[cytochrome b5] + 2 H2O. Its pathway is steroid metabolism; ergosterol biosynthesis. Functionally, C-5 sterol desaturase; part of the third module of ergosterol biosynthesis pathway that includes by the late steps of the pathway. Erg31 and erg32 catalyze the introduction of a C-5 double bond in the B ring to produce 5-dehydroepisterol. The third module or late pathway involves the ergosterol synthesis itself through consecutive reactions that mainly occur in the endoplasmic reticulum (ER) membrane. Firstly, the squalene synthase erg9 catalyzes the condensation of 2 farnesyl pyrophosphate moieties to form squalene, which is the precursor of all steroids. Secondly, squalene is converted into lanosterol by the consecutive action of the squalene epoxidase erg1 and the lanosterol synthase erg7. The lanosterol 14-alpha-demethylase erg11/cyp1 catalyzes C14-demethylation of lanosterol to produce 4,4'-dimethyl cholesta-8,14,24-triene-3-beta-ol. In the next steps, a complex process involving various demethylation, reduction and desaturation reactions catalyzed by the C-14 reductase erg24 and the C-4 demethylation complex erg25-erg26-erg27 leads to the production of zymosterol. Erg28 likely functions in the C-4 demethylation complex reaction by tethering erg26 and Erg27 to the endoplasmic reticulum or to facilitate interaction between these proteins. Then, the sterol 24-C-methyltransferase erg6 catalyzes the methyl transfer from S-adenosyl-methionine to the C-24 of zymosterol to form fecosterol. The C-8 sterol isomerase erg2 catalyzes the reaction which results in unsaturation at C-7 in the B ring of sterols and thus converts fecosterol to episterol. The sterol-C5-desaturases erg31 and erg32 then catalyze the introduction of a C-5 double bond in the B ring to produce 5-dehydroepisterol. The C-22 sterol desaturase erg5 further converts 5-dehydroepisterol into ergosta-5,7,22,24(28)-tetraen-3beta-ol by forming the C-22(23) double bond in the sterol side chain. Finally, ergosta-5,7,22,24(28)-tetraen-3beta-ol is substrate of the C-24(28) sterol reductase erg4 to produce ergosterol. In the genus Schizosaccharomyces, a second route exists between lanosterol and fecosterol, via the methylation of lanosterol to eburicol by erg6, followed by C14-demethylation by erg11/cyp1 and C4-demethylation by the demethylation complex erg25-erg26-erg27. The sequence is that of Delta(7)-sterol 5(6)-desaturase erg32 from Schizosaccharomyces pombe (strain 972 / ATCC 24843) (Fission yeast).